A 380-amino-acid chain; its full sequence is Queuine tRNA-ribosyltransferase (380 aa).

Catalysis depends on aspartate 96, which acts as the Proton acceptor. Residues 96-100 (DSGGF), aspartate 150, glutamine 193, and glycine 220 each bind substrate. An RNA binding region spans residues 251–257 (GVGAPDS). Aspartate 270 functions as the Nucleophile in the catalytic mechanism. The RNA binding; important for wobble base 34 recognition stretch occupies residues 275-279 (TRIAR). Zn(2+)-binding residues include cysteine 308, cysteine 310, cysteine 313, and histidine 339.

Belongs to the queuine tRNA-ribosyltransferase family. Homodimer. Within each dimer, one monomer is responsible for RNA recognition and catalysis, while the other monomer binds to the replacement base PreQ1. Requires Zn(2+) as cofactor.

The enzyme catalyses 7-aminomethyl-7-carbaguanine + guanosine(34) in tRNA = 7-aminomethyl-7-carbaguanosine(34) in tRNA + guanine. Its pathway is tRNA modification; tRNA-queuosine biosynthesis. Its function is as follows. Catalyzes the base-exchange of a guanine (G) residue with the queuine precursor 7-aminomethyl-7-deazaguanine (PreQ1) at position 34 (anticodon wobble position) in tRNAs with GU(N) anticodons (tRNA-Asp, -Asn, -His and -Tyr). Catalysis occurs through a double-displacement mechanism. The nucleophile active site attacks the C1' of nucleotide 34 to detach the guanine base from the RNA, forming a covalent enzyme-RNA intermediate. The proton acceptor active site deprotonates the incoming PreQ1, allowing a nucleophilic attack on the C1' of the ribose to form the product. After dissociation, two additional enzymatic reactions on the tRNA convert PreQ1 to queuine (Q), resulting in the hypermodified nucleoside queuosine (7-(((4,5-cis-dihydroxy-2-cyclopenten-1-yl)amino)methyl)-7-deazaguanosine). The chain is Queuine tRNA-ribosyltransferase from Streptococcus pneumoniae (strain Taiwan19F-14).